The sequence spans 102 residues: Protein RnfH (102 aa).

Belongs to the UPF0125 (RnfH) family.

This Haemophilus influenzae (strain 86-028NP) protein is Protein RnfH.